Reading from the N-terminus, the 228-residue chain is UPF0502 protein AZOSEA09860 (228 aa).

This sequence belongs to the UPF0502 family.

The protein is UPF0502 protein AZOSEA09860 of Aromatoleum aromaticum (strain DSM 19018 / LMG 30748 / EbN1) (Azoarcus sp. (strain EbN1)).